Here is an 89-residue protein sequence, read N- to C-terminus: Small ribosomal subunit protein uS17 (89 aa).

The protein belongs to the universal ribosomal protein uS17 family. In terms of assembly, part of the 30S ribosomal subunit.

In terms of biological role, one of the primary rRNA binding proteins, it binds specifically to the 5'-end of 16S ribosomal RNA. The chain is Small ribosomal subunit protein uS17 from Syntrophomonas wolfei subsp. wolfei (strain DSM 2245B / Goettingen).